Here is a 245-residue protein sequence, read N- to C-terminus: MFIGIVTLFPEMFKAITEFGVTGRAVKQNLLQVRCYNPRDFTHDKHKTVDDRPYGGGPGMLMMVQPLRDAIHSAKAEAGEGVKVIYLSPQGRKLEQSGVTELAQNKKLILVCGRYEGIDERLIQTEVDEEWSIGDYVLTGGELPAMTLIDAVARFIPGVLGKQASADEDSFAAGLLDCPHYTRPEELDGLTVPPVLMSGNHEQIRKWRLTQSLERTWLRRPELLEKLALTDEQKKILNQIKSETV.

S-adenosyl-L-methionine contacts are provided by residues glycine 113 and 133 to 138 (IGDYVL).

The protein belongs to the RNA methyltransferase TrmD family. In terms of assembly, homodimer.

It is found in the cytoplasm. It catalyses the reaction guanosine(37) in tRNA + S-adenosyl-L-methionine = N(1)-methylguanosine(37) in tRNA + S-adenosyl-L-homocysteine + H(+). Its function is as follows. Specifically methylates guanosine-37 in various tRNAs. In Actinobacillus succinogenes (strain ATCC 55618 / DSM 22257 / CCUG 43843 / 130Z), this protein is tRNA (guanine-N(1)-)-methyltransferase.